A 374-amino-acid polypeptide reads, in one-letter code: Pectate lyase 3 (374 aa).

Residues 1 to 22 (MKYLLPSAAAGLLLLAAQPTMA) form the signal peptide. Residues C93 and C176 are joined by a disulfide bond. Positions 150, 152, 187, and 191 each coordinate Ca(2+). Residue R239 is part of the active site. Cysteines 350 and 373 form a disulfide.

The protein belongs to the polysaccharide lyase 1 family. PLADES subfamily. Ca(2+) is required as a cofactor.

Its subcellular location is the secreted. It catalyses the reaction Eliminative cleavage of (1-&gt;4)-alpha-D-galacturonan to give oligosaccharides with 4-deoxy-alpha-D-galact-4-enuronosyl groups at their non-reducing ends.. It participates in glycan metabolism; pectin degradation; 2-dehydro-3-deoxy-D-gluconate from pectin: step 2/5. In terms of biological role, involved in maceration and soft-rotting of plant tissue. The chain is Pectate lyase 3 (pel3) from Pectobacterium carotovorum subsp. carotovorum (Erwinia carotovora subsp. carotovora).